Consider the following 422-residue polypeptide: Histidine--tRNA ligase (422 aa).

Belongs to the class-II aminoacyl-tRNA synthetase family. Homodimer.

It localises to the cytoplasm. The catalysed reaction is tRNA(His) + L-histidine + ATP = L-histidyl-tRNA(His) + AMP + diphosphate + H(+). The polypeptide is Histidine--tRNA ligase (Ruthia magnifica subsp. Calyptogena magnifica).